The primary structure comprises 239 residues: Protein GrpE (239 aa).

Disordered stretches follow at residues 1–53 (MIEE…EDLK) and 210–239 (GPGQ…SEEN). 2 stretches are compositionally biased toward basic and acidic residues: residues 34–53 (NEDK…EDLK) and 219–230 (SEEKDKVDKDID).

This sequence belongs to the GrpE family. Homodimer.

The protein resides in the cytoplasm. Its function is as follows. Participates actively in the response to hyperosmotic and heat shock by preventing the aggregation of stress-denatured proteins, in association with DnaK and GrpE. It is the nucleotide exchange factor for DnaK and may function as a thermosensor. Unfolded proteins bind initially to DnaJ; upon interaction with the DnaJ-bound protein, DnaK hydrolyzes its bound ATP, resulting in the formation of a stable complex. GrpE releases ADP from DnaK; ATP binding to DnaK triggers the release of the substrate protein, thus completing the reaction cycle. Several rounds of ATP-dependent interactions between DnaJ, DnaK and GrpE are required for fully efficient folding. The sequence is that of Protein GrpE from Prochlorococcus marinus (strain MIT 9515).